Reading from the N-terminus, the 304-residue chain is uncharacterized protein (304 aa).

A run of 10 helical transmembrane segments spans residues 5–25 (TIIL…FIAI), 42–62 (FLLA…PLLF), 68–88 (IFQL…ILYG), 96–116 (IASV…FIFF), 120–140 (LYFF…IILF), 150–170 (TIKG…IYLY), 178–198 (ISIL…FLVI), 215–235 (ILAT…SYFY), 245–265 (ASTI…FVWG), and 268–288 (IGID…ITIF). 2 EamA domains span residues 16 to 140 (ITWG…IILF) and 162 to 288 (TSHA…ITIF).

The protein belongs to the EamA transporter family.

Its subcellular location is the cell membrane. This is an uncharacterized protein from Buchnera aphidicola subsp. Schlechtendalia chinensis.